The following is a 523-amino-acid chain: MSQQVDKIKASYPLFLDQDYKDMLAKKRDGFEEKYPQDKIDEVFQWTTTKEYQELNFQREALTVNPAKACQPLGAVLCALGFEKTMPYVHGSQGCVAYFRSYFNRHFREPVSCVSDSMTEDAAVFGGQQNMKDGLQNCKATYKPDMIAVSTTCMAEVIGDDLNAFINNSKKEGFIPDEFPVPFAHTPSFVGSHVTGWDNMFEGIARYFTLKSMDDKVVGSNKKINIVPGFETYLGNFRVIKRMLSEMGVGYSLLSDPEEVLDTPADGQFRMYAGGTTQEEMKDAPNALNTVLLQPWHLEKTKKFVEGTWKHEVPKLNIPMGLDWTDEFLMKVSEISGQPIPASLTKERGRLVDMMTDSHTWLHGKRFALWGDPDFVMGLVKFLLELGCEPVHILCHNGNKRWKKAVDAILAASPYGKNATVYIGKDLWHLRSLVFTDKPDFMIGNSYGKFIQRDTLHKGKEFEVPLIRIGFPIFDRHHLHRSTTLGYEGAMQILTTLVNSILERLDEETRGMQATDYNHDLVR.

C70, C95, C153, and S188 together coordinate [8Fe-7S] cluster.

The protein belongs to the NifD/NifK/NifE/NifN family. In terms of assembly, tetramer of two alpha and two beta chains. Forms complex with the iron protein (nitrogenase component 2). Requires [8Fe-7S] cluster as cofactor.

It carries out the reaction N2 + 8 reduced [2Fe-2S]-[ferredoxin] + 16 ATP + 16 H2O = H2 + 8 oxidized [2Fe-2S]-[ferredoxin] + 2 NH4(+) + 16 ADP + 16 phosphate + 6 H(+). Its activity is regulated as follows. Nitrogenase holoenzyme is subject to 'conformational protection' by FeSII; under oxidizing conditions FeSII binds to the holoenzyme and reversibly protects it from oxidation. In terms of biological role, this molybdenum-iron protein is part of the nitrogenase complex that catalyzes the key enzymatic reactions in nitrogen fixation. The chain is Nitrogenase molybdenum-iron protein beta chain (nifK) from Azotobacter vinelandii.